Reading from the N-terminus, the 161-residue chain is Phosphopantetheine adenylyltransferase (161 aa).

Residue Thr-9 coordinates substrate. Residues 9 to 10 (TF) and His-17 each bind ATP. 3 residues coordinate substrate: Lys-41, Leu-73, and Arg-87. Residues 88–90 (GLR), Glu-98, and 123–129 (LSYISST) contribute to the ATP site.

This sequence belongs to the bacterial CoaD family. In terms of assembly, homohexamer. Mg(2+) serves as cofactor.

It is found in the cytoplasm. It carries out the reaction (R)-4'-phosphopantetheine + ATP + H(+) = 3'-dephospho-CoA + diphosphate. It participates in cofactor biosynthesis; coenzyme A biosynthesis; CoA from (R)-pantothenate: step 4/5. Functionally, reversibly transfers an adenylyl group from ATP to 4'-phosphopantetheine, yielding dephospho-CoA (dPCoA) and pyrophosphate. The sequence is that of Phosphopantetheine adenylyltransferase from Hahella chejuensis (strain KCTC 2396).